A 62-amino-acid polypeptide reads, in one-letter code: MTIIFQFALIGLVLLSFVLVVGVPVAYATPQNWVESKKLLWVGSAVWIALVFLVGLLNFFVV.

Transmembrane regions (helical) follow at residues 8 to 28 (ALIG…VAYA) and 41 to 61 (WVGS…NFFV).

This sequence belongs to the PsbZ family. In terms of assembly, PSII is composed of 1 copy each of membrane proteins PsbA, PsbB, PsbC, PsbD, PsbE, PsbF, PsbH, PsbI, PsbJ, PsbK, PsbL, PsbM, PsbT, PsbX, PsbY, PsbZ, Psb30/Ycf12, peripheral proteins PsbO, CyanoQ (PsbQ), PsbU, PsbV and a large number of cofactors. It forms dimeric complexes.

It localises to the cellular thylakoid membrane. May control the interaction of photosystem II (PSII) cores with the light-harvesting antenna, regulates electron flow through the 2 photosystem reaction centers. PSII is a light-driven water plastoquinone oxidoreductase, using light energy to abstract electrons from H(2)O, generating a proton gradient subsequently used for ATP formation. The protein is Photosystem II reaction center protein Z of Nostoc punctiforme (strain ATCC 29133 / PCC 73102).